The sequence spans 647 residues: DEAD-box ATP-dependent RNA helicase 18 (647 aa).

The Q motif signature appears at 23–51 (FSELSPALSPEVVKALKGGGFRRCTPVQA). A Helicase ATP-binding domain is found at 54–232 (IPLLLSHKDV…KAGLRNPVRV (179 aa)). Residue 67-74 (AATGSGKT) coordinates ATP. The DEAD box motif lies at 180-183 (DEAD). The 157-residue stretch at 274–430 (QLVDFLVQNN…DIVPQIRSAA (157 aa)) folds into the Helicase C-terminal domain. Residues 507–582 (KYKDKAREKQ…RLLKKLKRGV (76 aa)) adopt a coiled-coil conformation. The span at 512 to 545 (AREKQRQKTLKRKAEELALRPEIEKRRKAPEKPE) shows a compositional bias: basic and acidic residues. Disordered regions lie at residues 512–565 (AREK…KEDM) and 590–647 (KLTG…TRRR). Residues 596-610 (ESDDDDSSDGGDSDL) show a composition bias toward acidic residues. Over residues 619–633 (KVLKKIKQKGKAKGS) the composition is skewed to basic residues.

It belongs to the DEAD box helicase family. DDX55/SPB4 subfamily. In terms of assembly, interacts with BRI1. Phosphorylated.

It catalyses the reaction ATP + H2O = ADP + phosphate + H(+). This is DEAD-box ATP-dependent RNA helicase 18 from Oryza sativa subsp. japonica (Rice).